Consider the following 201-residue polypeptide: Probable cobalt-precorrin-6B C(15)-methyltransferase (decarboxylating) (201 aa).

S-adenosyl-L-methionine is bound by residues Thr28, 52 to 56 (GTGTG), Asp76, and Ala105.

It belongs to the methyltransferase superfamily. Archaeal-type CbiT family.

It carries out the reaction Co-precorrin-6B + S-adenosyl-L-methionine = Co-precorrin-7 + S-adenosyl-L-homocysteine + CO2. The protein operates within cofactor biosynthesis; adenosylcobalamin biosynthesis; cob(II)yrinate a,c-diamide from sirohydrochlorin (anaerobic route): step 8/10. Catalyzes the methylation of C-15 in cobalt-precorrin-6B followed by the decarboxylation of C-12 to form cobalt-precorrin-7. The protein is Probable cobalt-precorrin-6B C(15)-methyltransferase (decarboxylating) of Thermoplasma volcanium (strain ATCC 51530 / DSM 4299 / JCM 9571 / NBRC 15438 / GSS1).